Here is a 425-residue protein sequence, read N- to C-terminus: Glucan 1,3-beta-glucosidase (425 aa).

The first 17 residues, 1-17 (MLLTFAPIFLLISSIVA), serve as a signal peptide directing secretion. The active-site Proton donor is the glutamate 214. Intrachain disulfides connect cysteine 301/cysteine 423 and cysteine 326/cysteine 352. Lysine 328 acts as the Nucleophile in catalysis.

It belongs to the glycosyl hydrolase 5 (cellulase A) family.

The protein resides in the secreted. The catalysed reaction is Successive hydrolysis of beta-D-glucose units from the non-reducing ends of (1-&gt;3)-beta-D-glucans, releasing alpha-glucose.. Functionally, beta-glucanases participate in the metabolism of beta-glucan, the main structural component of the cell wall. It could also function biosynthetically as a transglycosylase. This Candida oleophila (Yeast) protein is Glucan 1,3-beta-glucosidase (EXG1).